We begin with the raw amino-acid sequence, 496 residues long: probable leucine aminopeptidase 2 (496 aa).

An N-terminal signal peptide occupies residues 1–16 (MRSLLWASLLSGVLAG). One can recognise a PA domain in the interval 111–205 (PSVEVTADVA…SLEDGQKLIK (95 aa)). Asparagine 224 carries an N-linked (GlcNAc...) asparagine glycan. Positions 248 and 260 each coordinate Zn(2+). Glutamate 292 acts as the Proton acceptor in catalysis. Residue glutamate 293 coordinates Zn(2+). An N-linked (GlcNAc...) asparagine glycan is attached at asparagine 307. Aspartate 321 provides a ligand contact to Zn(2+). Asparagine 341 and asparagine 402 each carry an N-linked (GlcNAc...) asparagine glycan. A Zn(2+)-binding site is contributed by histidine 419. Residues asparagine 424 and asparagine 458 are each glycosylated (N-linked (GlcNAc...) asparagine). The segment at 475 to 496 (KRAPKTHAHVSGSGCWHSQVEA) is disordered.

Belongs to the peptidase M28 family. M28A subfamily. In terms of assembly, monomer. Requires Zn(2+) as cofactor.

The protein resides in the secreted. Functionally, extracellular aminopeptidase that releases a wide variety of amino acids from natural peptides. This Aspergillus oryzae (strain ATCC 42149 / RIB 40) (Yellow koji mold) protein is probable leucine aminopeptidase 2 (lap2).